The chain runs to 268 residues: Tryptophan synthase alpha chain (268 aa).

Residues E49 and D60 each act as proton acceptor in the active site.

This sequence belongs to the TrpA family. In terms of assembly, tetramer of two alpha and two beta chains.

The catalysed reaction is (1S,2R)-1-C-(indol-3-yl)glycerol 3-phosphate + L-serine = D-glyceraldehyde 3-phosphate + L-tryptophan + H2O. Its pathway is amino-acid biosynthesis; L-tryptophan biosynthesis; L-tryptophan from chorismate: step 5/5. Functionally, the alpha subunit is responsible for the aldol cleavage of indoleglycerol phosphate to indole and glyceraldehyde 3-phosphate. In Edwardsiella ictaluri (strain 93-146), this protein is Tryptophan synthase alpha chain.